The sequence spans 1111 residues: Putative leucine--tRNA ligase, cytoplasmic (1111 aa).

The 'HIGH' region signature appears at 74–84 (PYMNGALHLGH). At Ser-460 the chain carries Phosphoserine. Residues 737 to 741 (KMSKS) carry the 'KMSKS' region motif. Residue Lys-740 participates in ATP binding.

It belongs to the class-I aminoacyl-tRNA synthetase family.

It localises to the cytoplasm. It catalyses the reaction tRNA(Leu) + L-leucine + ATP = L-leucyl-tRNA(Leu) + AMP + diphosphate. In Schizosaccharomyces pombe (strain 972 / ATCC 24843) (Fission yeast), this protein is Putative leucine--tRNA ligase, cytoplasmic (lrs1).